We begin with the raw amino-acid sequence, 150 residues long: Large ribosomal subunit protein uL15 (150 aa).

The tract at residues 1–57 (MSLTLQSLKPQKGARRRKMRKGRGIAAGQGASCGFGMRGQKSRSGRPTRPGFEGGQM) is disordered. A compositionally biased stretch (basic residues) spans 12-23 (KGARRRKMRKGR). The segment covering 25–37 (IAAGQGASCGFGM) has biased composition (gly residues).

The protein belongs to the universal ribosomal protein uL15 family. As to quaternary structure, part of the 50S ribosomal subunit.

Binds to the 23S rRNA. The polypeptide is Large ribosomal subunit protein uL15 (Synechococcus sp. (strain RCC307)).